The following is a 128-amino-acid chain: Small ribosomal subunit protein uS13 (128 aa).

A disordered region spans residues 97–128 (PVRGQRTRSNARTRKGPRPSRIKTKKKKEQTV). The span at 101-128 (QRTRSNARTRKGPRPSRIKTKKKKEQTV) shows a compositional bias: basic residues.

The protein belongs to the universal ribosomal protein uS13 family. As to quaternary structure, part of the 30S ribosomal subunit. Forms a loose heterodimer with protein S19. Forms two bridges to the 50S subunit in the 70S ribosome.

In terms of biological role, located at the top of the head of the 30S subunit, it contacts several helices of the 16S rRNA. In the 70S ribosome it contacts the 23S rRNA (bridge B1a) and protein L5 of the 50S subunit (bridge B1b), connecting the 2 subunits; these bridges are implicated in subunit movement. Contacts the tRNAs in the A and P-sites. The protein is Small ribosomal subunit protein uS13 of Pseudothermotoga lettingae (strain ATCC BAA-301 / DSM 14385 / NBRC 107922 / TMO) (Thermotoga lettingae).